We begin with the raw amino-acid sequence, 2259 residues long: Protein Ycf2 (2259 aa).

1556-1563 (GSQETGRS) is a binding site for ATP.

This sequence belongs to the Ycf2 family.

It is found in the plastid. Its subcellular location is the chloroplast stroma. Its function is as follows. Probable ATPase of unknown function. Its presence in a non-photosynthetic plant (Epifagus virginiana) and experiments in tobacco indicate that it has an essential function which is probably not related to photosynthesis. The chain is Protein Ycf2 from Physcomitrium patens (Spreading-leaved earth moss).